Reading from the N-terminus, the 428-residue chain is Glutamate-1-semialdehyde 2,1-aminomutase (428 aa).

Lys-267 bears the N6-(pyridoxal phosphate)lysine mark.

It belongs to the class-III pyridoxal-phosphate-dependent aminotransferase family. HemL subfamily. Homodimer. Requires pyridoxal 5'-phosphate as cofactor.

It is found in the cytoplasm. The catalysed reaction is (S)-4-amino-5-oxopentanoate = 5-aminolevulinate. Its pathway is porphyrin-containing compound metabolism; protoporphyrin-IX biosynthesis; 5-aminolevulinate from L-glutamyl-tRNA(Glu): step 2/2. The protein operates within porphyrin-containing compound metabolism; chlorophyll biosynthesis. The sequence is that of Glutamate-1-semialdehyde 2,1-aminomutase from Prochlorococcus marinus (strain NATL1A).